Here is a 482-residue protein sequence, read N- to C-terminus: tRNA sulfurtransferase (482 aa).

Residues 61–165 form the THUMP domain; that stretch reads LVIRDALTRI…DDRLLLIKGR (105 aa). ATP-binding positions include 183-184, K265, G287, and Q296; that span reads LI. The cysteines at positions 344 and 456 are disulfide-linked. Residues 404–482 enclose the Rhodanese domain; sequence FGPNDVILDI…GFANVKVYRP (79 aa). Residue C456 is the Cysteine persulfide intermediate of the active site.

The protein belongs to the ThiI family.

The protein localises to the cytoplasm. It carries out the reaction [ThiI sulfur-carrier protein]-S-sulfanyl-L-cysteine + a uridine in tRNA + 2 reduced [2Fe-2S]-[ferredoxin] + ATP + H(+) = [ThiI sulfur-carrier protein]-L-cysteine + a 4-thiouridine in tRNA + 2 oxidized [2Fe-2S]-[ferredoxin] + AMP + diphosphate. It catalyses the reaction [ThiS sulfur-carrier protein]-C-terminal Gly-Gly-AMP + S-sulfanyl-L-cysteinyl-[cysteine desulfurase] + AH2 = [ThiS sulfur-carrier protein]-C-terminal-Gly-aminoethanethioate + L-cysteinyl-[cysteine desulfurase] + A + AMP + 2 H(+). The protein operates within cofactor biosynthesis; thiamine diphosphate biosynthesis. In terms of biological role, catalyzes the ATP-dependent transfer of a sulfur to tRNA to produce 4-thiouridine in position 8 of tRNAs, which functions as a near-UV photosensor. Also catalyzes the transfer of sulfur to the sulfur carrier protein ThiS, forming ThiS-thiocarboxylate. This is a step in the synthesis of thiazole, in the thiamine biosynthesis pathway. The sulfur is donated as persulfide by IscS. This chain is tRNA sulfurtransferase, found in Salmonella typhimurium (strain LT2 / SGSC1412 / ATCC 700720).